Here is a 670-residue protein sequence, read N- to C-terminus: DNA-binding transcriptional activator HyfR (670 aa).

The GAF domain maps to 169-311 (DLDDLIADVA…HIADRIAIAV (143 aa)). The Cys-rich segment, might bind a metal cluster signature appears at 207–221 (CSDLSASHCACLPRC). The 230-residue stretch at 347–576 (IIYQSQAMED…LENVIERAVL (230 aa)) folds into the Sigma-54 factor interaction domain. Residues 375 to 382 (GETGTGKE) and 438 to 447 (ADGGTLFLDE) each bind ATP. Positions 641–660 (PRGAATRLGMKRTTLLSRMQ) form a DNA-binding region, H-T-H motif.

A transcriptional activator of its own operon; when overexpressed operon expression is strongly enhanced by low pH (under pH 6.0), strongly inhibited by O(2) but only weakly stimulated by fumarate. Expression in situ is very weak. The chain is DNA-binding transcriptional activator HyfR from Escherichia coli (strain K12).